The primary structure comprises 560 residues: Nucleoprotein (560 aa).

The binding site for the cap structure m7GTP stretch occupies residues 53–236 (MRKDKRTDTD…ITQEQSQINV (184 aa)). A disordered region spans residues 333–353 (LTDTGSPNHPPVRNGGSPRLS). The Mn(2+) site is built by D379 and E381. E389, C496, H499, and C520 together coordinate Zn(2+). D524 provides a ligand contact to Mn(2+).

Belongs to the arenaviridae nucleocapsid protein family. In terms of assembly, homomultimerizes to form the nucleocapsid. Binds to viral genomic RNA. Interacts with glycoprotein G2. Interacts with protein Z; this interaction probably directs the encapsidated genome to budding sites. Interacts with protein L; this interaction does not interfere with Z-L interaction. Interacts with host IKBKE (via Protein kinase domain); the interaction inhibits IKBKE kinase activity.

The protein resides in the virion. Its subcellular location is the host cytoplasm. Functionally, encapsidates the genome, protecting it from nucleases. The encapsidated genomic RNA is termed the nucleocapsid (NC). Serves as template for viral transcription and replication. The increased presence of protein N in host cell does not seem to trigger the switch from transcription to replication as observed in other negative strain RNA viruses. Through the interaction with host IKBKE, strongly inhibits the phosphorylation and nuclear translocation of host IRF3, a protein involved in interferon activation pathway, leading to the inhibition of interferon-beta and IRF3-dependent promoters activation. Also encodes a functional 3'-5' exoribonuclease that degrades preferentially dsRNA substrates and thereby participates in the suppression of interferon induction. The sequence is that of Nucleoprotein from Pirital mammarenavirus (isolate Rat/Venezuela/VAV-488/1995) (PIRV).